A 168-amino-acid chain; its full sequence is Large ribosomal subunit protein bL17 (168 aa).

Positions 121–146 (AEAEGGEEKAEQKTEKKAAKAKEPKA) are enriched in basic and acidic residues. A disordered region spans residues 121–168 (AEAEGGEEKAEQKTEKKAAKAKEPKAAKAPKKAAAKPKAKAEKKGAEE). Basic residues predominate over residues 148 to 158 (KAPKKAAAKPK). Basic and acidic residues predominate over residues 159–168 (AKAEKKGAEE).

This sequence belongs to the bacterial ribosomal protein bL17 family. In terms of assembly, part of the 50S ribosomal subunit. Contacts protein L32.

This chain is Large ribosomal subunit protein bL17, found in Anaeromyxobacter sp. (strain Fw109-5).